The primary structure comprises 382 residues: (R,R)-butanediol dehydrogenase (382 aa).

Cys-39 serves as a coordination point for Zn(2+). Ser-63 carries the post-translational modification Phosphoserine. 6 residues coordinate Zn(2+): His-73, Cys-103, Cys-120, Cys-123, Cys-131, and Glu-173.

Belongs to the zinc-containing alcohol dehydrogenase family. In terms of assembly, homodimer. It depends on Zn(2+) as a cofactor.

It localises to the cytoplasm. The catalysed reaction is (R,R)-butane-2,3-diol + NAD(+) = (R)-acetoin + NADH + H(+). In terms of biological role, NAD-dependent (R,R)-butanediol dehydrogenase which catalyzes oxidation of (R,R)-butane-2,3-diol to (3R)-acetoin, of meso-butanediol to (3S)-acetoin, and reduction of acetoin. Allows the use of 2,3-butanediol as an aerobic carbon source. In Saccharomyces cerevisiae (strain ATCC 204508 / S288c) (Baker's yeast), this protein is (R,R)-butanediol dehydrogenase (BDH1).